A 127-amino-acid polypeptide reads, in one-letter code: MYLCYTCFFLPSYDCKRLFTIVRAYIPARLSCNQPMVLFFTSPSSSSLYSLLFSKVSIISCAVLPLSIPFRMNLYNLFRLEKVFLFLLSLHLLPYLASRCLIDGFPLIPVSYSSHIVFTSVGAFNIL.

The next 2 membrane-spanning stretches (helical) occupy residues 48 to 68 and 83 to 103; these read LYSL…PLSI and VFLF…CLID.

It is found in the membrane. This is an uncharacterized protein from Saccharomyces cerevisiae (strain ATCC 204508 / S288c) (Baker's yeast).